The sequence spans 205 residues: GTP-binding protein yptV5 (205 aa).

Position 15-22 (15-22 (GDSGVGKT)) interacts with GTP. Residues 37-45 (YKATIGADF) carry the Effector region motif. Residues 63–67 (DTAGQ) and 125–128 (NKID) contribute to the GTP site. S-geranylgeranyl cysteine attachment occurs at residues Cys-204 and Cys-205.

It belongs to the small GTPase superfamily. Rab family.

Its subcellular location is the cell membrane. Protein transport. Probably involved in vesicular traffic. In Volvox carteri (Green alga), this protein is GTP-binding protein yptV5 (YPTV5).